The chain runs to 298 residues: Putative glycylpeptide N-tetradecanoyltransferase (298 aa).

This sequence belongs to the NMT family.

It carries out the reaction N-terminal glycyl-[protein] + tetradecanoyl-CoA = N-tetradecanoylglycyl-[protein] + CoA + H(+). In terms of biological role, adds a myristoyl group to the N-terminal glycine residue of certain proteins. In Melanoplus sanguinipes (Migratory grasshopper), this protein is Putative glycylpeptide N-tetradecanoyltransferase.